The following is a 371-amino-acid chain: Partitioning defective 6 homolog beta (371 aa).

2 positions are modified to phosphoserine: Ser-10 and Ser-11. The region spanning 16 to 96 (TMEVKSKFGA…PLLRIFIQKK (81 aa)) is the PB1 domain. Residues 126 to 253 (RKKPHIVISM…ITVRPANQRN (128 aa)) form an interaction with PARD3 and CDC42 region. The Pseudo-CRIB domain maps to 133-150 (ISMPQDFRPVSSIIDVDI). The PDZ domain occupies 157–250 (RVRLYKYGTE…NLIITVRPAN (94 aa)). Disordered stretches follow at residues 253–273 (NNVVRNSRTSGSSSQSTDNSL) and 326–371 (FESG…IITL). The segment covering 326-340 (FESGQNGFSPPQDTS) has biased composition (polar residues). Over residues 352 to 363 (LESRAPDQKLLE) the composition is skewed to basic and acidic residues.

It belongs to the PAR6 family. Interacts with PARD3. Interacts with GTP-bound forms of CDC42, RHOQ/TC10 and RAC1. Interacts with the N-terminal part of PRKCI and PRKCZ. Part of a complex with PARD3, CDC42 or RAC1 and PRKCI or PRKCZ. Part of a complex with LLGL1 and PRKCI. Interacts with ALS2CR19. Interacts with ECT2. Interacts with PALS1. In terms of tissue distribution, expressed in pancreas and in both adult and fetal kidney. Weakly expressed in placenta and lung. Not expressed in other tissues.

The protein resides in the cytoplasm. It localises to the cell membrane. It is found in the cell junction. The protein localises to the tight junction. Adapter protein involved in asymmetrical cell division and cell polarization processes. Probably involved in formation of epithelial tight junctions. Association with PARD3 may prevent the interaction of PARD3 with F11R/JAM1, thereby preventing tight junction assembly. The PARD6-PARD3 complex links GTP-bound Rho small GTPases to atypical protein kinase C proteins. In Mus musculus (Mouse), this protein is Partitioning defective 6 homolog beta (Pard6b).